A 463-amino-acid polypeptide reads, in one-letter code: ATP synthase subunit beta (463 aa).

152-159 (GGAGVGKT) provides a ligand contact to ATP.

Belongs to the ATPase alpha/beta chains family. As to quaternary structure, F-type ATPases have 2 components, CF(1) - the catalytic core - and CF(0) - the membrane proton channel. CF(1) has five subunits: alpha(3), beta(3), gamma(1), delta(1), epsilon(1). CF(0) has three main subunits: a(1), b(2) and c(9-12). The alpha and beta chains form an alternating ring which encloses part of the gamma chain. CF(1) is attached to CF(0) by a central stalk formed by the gamma and epsilon chains, while a peripheral stalk is formed by the delta and b chains.

The protein resides in the cell inner membrane. The catalysed reaction is ATP + H2O + 4 H(+)(in) = ADP + phosphate + 5 H(+)(out). Functionally, produces ATP from ADP in the presence of a proton gradient across the membrane. The catalytic sites are hosted primarily by the beta subunits. The polypeptide is ATP synthase subunit beta (Shewanella baltica (strain OS223)).